Consider the following 58-residue polypeptide: Alpha-conotoxin AuIB (58 aa).

Positions 1 to 16 (MFTVFLLVVLATTVVS) are cleaved as a signal peptide. The propeptide occupies 17–39 (FTSDRASDGRKDAASGLIALTMK). Intrachain disulfides connect C41-C47 and C42-C54. C54 is modified (cysteine amide).

In terms of tissue distribution, expressed by the venom duct.

It localises to the secreted. In terms of biological role, alpha-conotoxins act on postsynaptic membranes, they bind to the nicotinic acetylcholine receptors (nAChR) and thus inhibit them. This toxin blocks mammalian nAChR alpha-3-beta-4/CHRNA3-CHRNB4 subunits. Also exhibits inhibition of D.melanogaster alpha-7/CHRNA7 nAChRs. The chain is Alpha-conotoxin AuIB from Conus aulicus (Princely cone).